The sequence spans 450 residues: IMP-specific 5'-nucleotidase 1 (450 aa).

His-144 contributes to the ATP binding site. Asp-172 (nucleophile) is an active-site residue. IMP-binding residues include Asp-172, Asp-174, Asp-180, Thr-208, Asp-376, and Lys-384. Positions 172 and 174 each coordinate Mg(2+). Residue Asp-174 is the Proton donor of the active site. Asp-411 contributes to the Mg(2+) binding site.

This sequence belongs to the ISN1 family. Homotetramer. Mg(2+) serves as cofactor.

The enzyme catalyses IMP + H2O = inosine + phosphate. Its activity is regulated as follows. Allosterically activated by ATP. ATP binding is a prerequisite to magnesium and substrate binding. ATP binds to 2 of the subunits in the homotetramer inducing a closure of these 2 subunits and the release of the C-terminal loop, thereby activating the enzyme. Its function is as follows. IMP-specific 5'-nucleotidase involved in IMP (inosine 5'-phosphate) degradation. The protein is IMP-specific 5'-nucleotidase 1 (ISN1) of Saccharomyces cerevisiae (strain ATCC 204508 / S288c) (Baker's yeast).